The chain runs to 353 residues: Quinolinate synthase (353 aa).

Iminosuccinate contacts are provided by His-47 and Ser-68. Residue Cys-113 participates in [4Fe-4S] cluster binding. Residues Tyr-139 to Asn-141 and Ser-156 contribute to the iminosuccinate site. Residue Cys-200 coordinates [4Fe-4S] cluster. Residues His-226–Glu-228 and Thr-243 each bind iminosuccinate. Cys-297 lines the [4Fe-4S] cluster pocket.

The protein belongs to the quinolinate synthase family. Type 1 subfamily. [4Fe-4S] cluster is required as a cofactor.

It localises to the cytoplasm. The catalysed reaction is iminosuccinate + dihydroxyacetone phosphate = quinolinate + phosphate + 2 H2O + H(+). Its pathway is cofactor biosynthesis; NAD(+) biosynthesis; quinolinate from iminoaspartate: step 1/1. Its function is as follows. Catalyzes the condensation of iminoaspartate with dihydroxyacetone phosphate to form quinolinate. The polypeptide is Quinolinate synthase (Vibrio campbellii (strain ATCC BAA-1116)).